Reading from the N-terminus, the 201-residue chain is Glutathione peroxidase 1, mitochondrial (201 aa).

A mitochondrion-targeting transit peptide spans 1–27; it reads MLLTRKNVAVRPARAARRDVRAMSLLG. The active site involves Sec-75. Position 75 (Sec-75) is a non-standard amino acid, selenocysteine.

Its subcellular location is the mitochondrion. The enzyme catalyses 2 glutathione + H2O2 = glutathione disulfide + 2 H2O. Functionally, may constitute a glutathione peroxidase-like protective system against oxidative stresses. Hydrogen peroxide, tert-butyl hydroperoxide and cumene, but not phosphatidylcholine hydroperoxide, can act as acceptors. This chain is Glutathione peroxidase 1, mitochondrial, found in Chlamydomonas reinhardtii (Chlamydomonas smithii).